Consider the following 289-residue polypeptide: Sphingomyelinase D (289 aa).

The signal sequence occupies residues 1–22 (MQSISVLICVLLALSILNFTVA). The active site involves H34. Mg(2+) contacts are provided by E54, D56, and D103. Positions 282-289 (ATEDDAPW) match the SMD-tail motif.

The protein belongs to the sphingomyelinase D/phospholipase D family. Mg(2+) serves as cofactor.

The protein resides in the secreted. The catalysed reaction is a sphingomyelin + H2O = an N-acylsphing-4-enine 1-phosphate + choline + H(+). Sphingomyelinase activity is reduced by 33 percent following addition of EDTA. Catalyzes the hydrolysis of sphingomyelin. Sphingomyelinases D are produced by some spider in their venoms, but also by arthropods such as ticks, or pathogenic bacteria and fungi. They might play a role in pathogenicity through different mechanisms, such as membrane destabilization and host cell penetration, but also pulmonary inflammation and cutaneous lesions. This Aspergillus flavus (strain ATCC 200026 / FGSC A1120 / IAM 13836 / NRRL 3357 / JCM 12722 / SRRC 167) protein is Sphingomyelinase D.